The following is a 340-amino-acid chain: Melanin-concentrating hormone receptor 2 (340 aa).

At 1 to 39 the chain is on the extracellular side; sequence MNPFHASCWNTSAELLNKSWNKEFAYQTASVVDTVILPS. Asn10 and Asn17 each carry an N-linked (GlcNAc...) asparagine glycan. Residues 40 to 60 form a helical membrane-spanning segment; it reads MIGIICSTGLVGNILIVFTII. Topologically, residues 61 to 69 are cytoplasmic; sequence RSRKKTVPD. Residues 70 to 90 traverse the membrane as a helical segment; the sequence is IYICNLAVADLVHIVGMPFLI. At 91-104 the chain is on the extracellular side; that stretch reads HQWARGGEWVFGGP. The helical transmembrane segment at 105-129 threads the bilayer; that stretch reads LCTIITSLDTCNQFACSAIMTVMSV. Topologically, residues 130–154 are cytoplasmic; the sequence is DRYFALVQPFRLTRWRTRYKTIRIN. Residues 155–175 traverse the membrane as a helical segment; it reads LGLWAASFILALPVWVYSKVI. At 176–200 the chain is on the extracellular side; the sequence is KFKDGVESCAFDLTSPDDVLWYTLY. A helical membrane pass occupies residues 201-221; it reads LTITTFFFPLPLILVCYILIL. The Cytoplasmic segment spans residues 222–252; sequence CYTWEMYQQNKDARCCNPSVPKQRVMKLTKM. Residues 253 to 273 form a helical membrane-spanning segment; that stretch reads VLVLVVVFILSAAPYHVIQLV. The Extracellular segment spans residues 274-288; the sequence is NLQMEQPTLAFYVGY. Residues 289–309 form a helical membrane-spanning segment; that stretch reads YLSICLSYASSSINPFLYILL. Residues 310–340 lie on the Cytoplasmic side of the membrane; the sequence is SGNFQKRLPQIQRRATEKEINNMGNTLKSHF.

The protein belongs to the G-protein coupled receptor 1 family. As to expression, specifically expressed in the brain, with highest levels in cerebral cortex, hippocampus and amygdala. No expression detected in the cerebellum, thalamus or hypothalamus.

Its subcellular location is the cell membrane. Receptor for melanin-concentrating hormone, coupled to G proteins that activate phosphoinositide hydrolysis. The protein is Melanin-concentrating hormone receptor 2 (MCHR2) of Homo sapiens (Human).